The sequence spans 441 residues: G-protein coupled receptor family C group 5 member C (441 aa).

An N-terminal signal peptide occupies residues 1–23; sequence MAIHKALVMCLGLPLFLFPGAWA. The Extracellular segment spans residues 24–50; that stretch reads QGHVPPGCSQGLNPLYYNLCDRSGAWG. A helical transmembrane segment spans residues 51-71; sequence IVLEAVAGAGIVTTFVLTIIL. Over 72 to 85 the chain is Cytoplasmic; sequence VASLPFVQDTKKRS. Residues 86 to 106 form a helical membrane-spanning segment; it reads LLGTQVFFLLGTLGLFCLVFA. Residues 107–120 lie on the Extracellular side of the membrane; the sequence is CVVKPDFSTCASRR. The helical transmembrane segment at 121-141 threads the bilayer; sequence FLFGVLFAICFSCLAAHVFAL. Residues 142-155 are Cytoplasmic-facing; sequence NFLARKNHGPRGWV. Residues 156-176 traverse the membrane as a helical segment; the sequence is IFTVALLLTLVEVIINTEWLI. Topologically, residues 177–208 are extracellular; sequence ITLVRGSGEGGPQGNSSAGWAVASPCAIANMD. An N-linked (GlcNAc...) asparagine glycan is attached at Asn191. A helical membrane pass occupies residues 209-229; that stretch reads FVMALIYVMLLLLGAFLGAWP. Over 230–241 the chain is Cytoplasmic; it reads ALCGRYKRWRKH. The chain crosses the membrane as a helical span at residues 242-262; the sequence is GVFVLLTTATSVAIWVVWIVM. Topologically, residues 263–279 are extracellular; sequence YTYGNKQHNSPTWDDPT. Residues 280–300 traverse the membrane as a helical segment; sequence LAIALAANAWAFVLFYVIPEV. Residues 301-441 lie on the Cytoplasmic side of the membrane; sequence SQVTKSSPEQ…QVFRNPYVWD (141 aa). Phosphoserine occurs at positions 344, 383, 403, and 406. The disordered stretch occupies residues 412–441; the sequence is DMYSAQSHQAATPPKDGKNSQVFRNPYVWD. Tyr414 carries the post-translational modification Phosphotyrosine. Position 423 is a phosphothreonine (Thr423).

The protein belongs to the G-protein coupled receptor 3 family. In terms of tissue distribution, expression is highest in the periphery, particularly in the stomach, but also in the kidney, liver, pancreas, and prostate. In brain, levels of expression are generally lower than in the periphery, with the exception of cerebellum, spinal cord, and dorsal root ganglia (DRG).

It is found in the cell membrane. Its subcellular location is the cytoplasmic vesicle membrane. In terms of biological role, this retinoic acid-inducible G-protein coupled receptor provide evidence for a possible interaction between retinoid and G-protein signaling pathways. The polypeptide is G-protein coupled receptor family C group 5 member C (GPRC5C) (Homo sapiens (Human)).